A 564-amino-acid polypeptide reads, in one-letter code: H/ACA ribonucleoprotein complex non-core subunit NAF1 (564 aa).

5 disordered regions span residues 1 to 29, 108 to 218, 238 to 264, 387 to 489, and 538 to 564; these read MESEQPAAVKASAPIEEPQSTETAVELGK, LVVQ…DSEG, DEDDEDFDEDGATGDRSRRRQPPKVRG, ASWE…HPSY, and PHMYPPPPPFAPPPPNNQSHQGQPPPS. A compositionally biased stretch (low complexity) spans 146-157; sequence ASGLSLLAAYSS. The segment covering 238 to 249 has biased composition (acidic residues); it reads DEDDEDFDEDGA. Thr250 carries the post-translational modification Phosphothreonine. The residue at position 254 (Ser254) is a Phosphoserine. Residues 388–402 show a composition bias toward basic and acidic residues; it reads SWEHDVEPPARYVDH. Ser403 bears the Phosphoserine mark. Low complexity predominate over residues 426 to 446; that stretch reads STDSVDTVTSVATTATKASSV. At Thr427 the chain carries Phosphothreonine. At Ser429 the chain carries Phosphoserine. Thr432 carries the post-translational modification Phosphothreonine. Positions 468–489 are enriched in polar residues; the sequence is PSINQHNQNQPQDEQYNFHPSY. Residues 538 to 553 show a composition bias toward pro residues; the sequence is PHMYPPPPPFAPPPPN. A compositionally biased stretch (polar residues) spans 554–564; that stretch reads NQSHQGQPPPS.

The protein belongs to the NAF1 family. In terms of assembly, during assembly of the complex, component of the box H/ACA small nucleolar ribonucleoprotein (H/ACA snoRNP) complex.

The protein resides in the nucleus. In terms of biological role, RNA-binding protein required for the maturation of the box H/ACA small nucleolar ribonucleoprotein (H/ACA snoRNP) complex and ribosome biogenesis. During assembly of the H/ACA snoRNP complex it associates with the complex and dissociates during complex maturation, becoming replaced by Gar1 to yield mature H/ACA snoRNP complex. The chain is H/ACA ribonucleoprotein complex non-core subunit NAF1 from Drosophila melanogaster (Fruit fly).